We begin with the raw amino-acid sequence, 437 residues long: 3-deoxy-D-manno-octulosonic acid transferase (437 aa).

A helical; Signal-anchor membrane pass occupies residues 16-36; the sequence is VVLVCAFVIALPKLLYKMLVY. Glu-70 functions as the Proton acceptor in the catalytic mechanism. Residues 279-280, 319-321, and 346-349 each bind CMP; these read PR, IGL, and NLLE.

It belongs to the glycosyltransferase group 1 family. Glycosyltransferase 30 subfamily.

The protein resides in the cell inner membrane. It carries out the reaction lipid IVA (E. coli) + CMP-3-deoxy-beta-D-manno-octulosonate = alpha-Kdo-(2-&gt;6)-lipid IVA (E. coli) + CMP + H(+). The enzyme catalyses alpha-Kdo-(2-&gt;6)-lipid IVA (E. coli) + CMP-3-deoxy-beta-D-manno-octulosonate = alpha-Kdo-(2-&gt;4)-alpha-Kdo-(2-&gt;6)-lipid IVA (E. coli) + CMP + H(+). The catalysed reaction is alpha-Kdo-(2-&gt;4)-alpha-Kdo-(2-&gt;6)-lipid IVA (E. coli) + CMP-3-deoxy-beta-D-manno-octulosonate = alpha-Kdo-(2-&gt;8)-alpha-Kdo-(2-&gt;4)-alpha-Kdo-(2-&gt;6)-lipid IVA (E. coli) + CMP + H(+). The protein operates within bacterial outer membrane biogenesis; LPS core biosynthesis. Its function is as follows. Involved in lipopolysaccharide (LPS) biosynthesis. Catalyzes the transfer of three 3-deoxy-D-manno-octulosonate (Kdo) residues from CMP-Kdo to lipid IV(A), the tetraacyldisaccharide-1,4'-bisphosphate precursor of lipid A. Thus generates the genus-specific LPS epitope of Chlamydia, composed of the trisaccharide alpha-Kdo-(2-&gt;8)-alpha-Kdo-(2-&gt;4)-alpha-Kdo. The chain is 3-deoxy-D-manno-octulosonic acid transferase (waaA) from Chlamydia pneumoniae (Chlamydophila pneumoniae).